The chain runs to 460 residues: Cation efflux system protein CusC (460 aa).

A signal peptide spans Met-1–Gly-17. Cys-18 is lipidated: N-palmitoyl cysteine. The S-diacylglycerol cysteine moiety is linked to residue Cys-18.

The protein belongs to the outer membrane factor (OMF) (TC 1.B.17) family. In terms of assembly, homotrimer. Component of the cus efflux system composed of CusA, CusB, CusC and CusF.

It localises to the cell outer membrane. Functionally, forms pores that allow passive diffusion of cations across the outer membrane. Part of a cation efflux system that mediates resistance to copper and silver. The sequence is that of Cation efflux system protein CusC (cusC) from Escherichia coli O157:H7.